The chain runs to 341 residues: N-acetyl-gamma-glutamyl-phosphate reductase (341 aa).

Residue C145 is part of the active site.

The protein belongs to the NAGSA dehydrogenase family. Type 1 subfamily.

The protein resides in the cytoplasm. The catalysed reaction is N-acetyl-L-glutamate 5-semialdehyde + phosphate + NADP(+) = N-acetyl-L-glutamyl 5-phosphate + NADPH + H(+). It participates in amino-acid biosynthesis; L-arginine biosynthesis; N(2)-acetyl-L-ornithine from L-glutamate: step 3/4. Its function is as follows. Catalyzes the NADPH-dependent reduction of N-acetyl-5-glutamyl phosphate to yield N-acetyl-L-glutamate 5-semialdehyde. This is N-acetyl-gamma-glutamyl-phosphate reductase from Streptomyces clavuligerus.